The primary structure comprises 64 residues: Alpha-conotoxin-like Lt1.3 (64 aa).

The N-terminal stretch at 1-21 (MGMRMMFTMFLLVVLTTTVVS) is a signal peptide. Positions 22–45 (FNLDRESNHENRRTSNQITRGMWD) are excised as a propeptide. Intrachain disulfides connect Cys47–Cys53 and Cys48–Cys61. The tract at residues 49–51 (DDP) is lacks the Ser-Xaa-Pro motif that is crucial for potent interaction with nAChR.

Belongs to the conotoxin A superfamily. In terms of tissue distribution, expressed by the venom duct.

The protein localises to the secreted. Alpha-conotoxins act on postsynaptic membranes, they bind to the nicotinic acetylcholine receptors (nAChR) and thus inhibit them. Has possibly a distinct nAChR binding mode from other alpha-conotoxins, due to a different three residue motif (lacks the Ser-Xaa-Pro motif). The chain is Alpha-conotoxin-like Lt1.3 from Conus litteratus (Lettered cone).